We begin with the raw amino-acid sequence, 518 residues long: Crotonobetaine/carnitine--CoA ligase (518 aa).

Belongs to the ATP-dependent AMP-binding enzyme family.

It catalyses the reaction 4-(trimethylamino)butanoate + ATP + CoA = 4-(trimethylamino)butanoyl-CoA + AMP + diphosphate. The catalysed reaction is crotonobetaine + ATP + CoA = crotonobetainyl-CoA + AMP + diphosphate. It carries out the reaction (R)-carnitine + ATP + CoA = (R)-carnitinyl-CoA + AMP + diphosphate. It functions in the pathway amine and polyamine metabolism; carnitine metabolism. In terms of biological role, catalyzes the transfer of CoA to carnitine, generating the initial carnitinyl-CoA needed for the CaiB reaction cycle. Also has activity toward crotonobetaine and gamma-butyrobetaine. This Proteus mirabilis (strain HI4320) protein is Crotonobetaine/carnitine--CoA ligase.